Reading from the N-terminus, the 550-residue chain is MNADSRTRLNQRPEWTALAKHREELAGTHLRDLFAADPGRGAGYTLEVGDLHVDYSKHLVTDETLRLLRELAAATDVFGLRDAMFRGEKINVTEDRAVLHTALRAPRDAVVEVDGENVVPAVHAVLDKMSTFAERVRTGEWTGHTGKPIKNIVNVGIGGSDLGPAMAYEVLRSFTDRSLTVRFVSNVDGADLHEAVRDLDPAETLFVIASKTFTTIETITNATSARDWLLTELKAGQEAVAKHFVALSTNAEKVSEFGIDTANMFEFWDWVGGRYSFDSAIGLSLMIAIGPERFREMLDGFRIVDEHFESAPAEDNVPLLLGLLGIWYGNFHDAQSHAVLPYSHYLSKFTAYLQQLDMESNGKSVQRDGNPVEWETGPVVWGTPGTNGQHAYYQLIHQGTKLIPADFIGFAEPVADLLPGLVAQHDLLMANFFAQTQALAFGKTPDEVRAEGVPEQLVPHKTFKGNHPTTTILAKELTPSVLGQLIALYEHKVFVQGAVWNIDSFDQWGVELGKVLAKRVEPALTEGADVPGLDESTKALVAKYRQLRGR.

Residue E359 is the Proton donor of the active site. Active-site residues include H390 and K514.

The protein belongs to the GPI family.

Its subcellular location is the cytoplasm. It carries out the reaction alpha-D-glucose 6-phosphate = beta-D-fructose 6-phosphate. The protein operates within carbohydrate biosynthesis; gluconeogenesis. It functions in the pathway carbohydrate degradation; glycolysis; D-glyceraldehyde 3-phosphate and glycerone phosphate from D-glucose: step 2/4. Functionally, catalyzes the reversible isomerization of glucose-6-phosphate to fructose-6-phosphate. This Streptomyces avermitilis (strain ATCC 31267 / DSM 46492 / JCM 5070 / NBRC 14893 / NCIMB 12804 / NRRL 8165 / MA-4680) protein is Glucose-6-phosphate isomerase 2.